We begin with the raw amino-acid sequence, 267 residues long: Thiamine thiazole synthase (267 aa).

Residues S47, 66–67 (ER), G74, V138, and 164–166 (HID) each bind NAD(+). D166 and H181 together coordinate Fe cation. Residues S184 and M230 each contribute to the NAD(+) site. R240 contacts glycine.

This sequence belongs to the THI4 family. In terms of assembly, homooctamer; tetramer of dimers. The cofactor is Fe(2+).

The catalysed reaction is hydrogen sulfide + glycine + NAD(+) = ADP-5-ethyl-4-methylthiazole-2-carboxylate + nicotinamide + 3 H2O + H(+). The protein operates within cofactor biosynthesis; thiamine diphosphate biosynthesis. Involved in the biosynthesis of the thiazole moiety of thiamine. Catalyzes the conversion of NAD and glycine to adenosine diphosphate 5-(2-hydroxyethyl)-4-methylthiazole-2-carboxylate (ADT), an adenylated thiazole intermediate, using free sulfide as a source of sulfur. The sequence is that of Thiamine thiazole synthase from Methanocaldococcus jannaschii (strain ATCC 43067 / DSM 2661 / JAL-1 / JCM 10045 / NBRC 100440) (Methanococcus jannaschii).